Reading from the N-terminus, the 602-residue chain is Leishmanolysin (602 aa).

Residues 1–39 (MSVDSSSTHRRRCVAARLVRLAAAGAAVTVAVGTAAAWA) form the signal peptide. A propeptide spans 40-100 (HAGALQHRCV…DPRPGSARSV (61 aa)) (activation peptide). 2 disulfides stabilise this stretch: C125–C142 and C191–C230. H264 is a Zn(2+) binding site. E265 is a catalytic residue. H268 is a binding site for Zn(2+). N300 carries an N-linked (GlcNAc...) asparagine glycan. Disulfide bonds link C314-C386, C393-C455, C406-C425, C415-C489, C466-C510, C515-C565, and C535-C558. Zn(2+) is bound at residue H334. N407 carries an N-linked (GlcNAc...) asparagine glycan. N534 carries N-linked (GlcNAc...) asparagine glycosylation. A lipid anchor (GPI-anchor amidated asparagine) is attached at N577. Residues 578 to 602 (TAAGRRGPRAAATALLVAALLAVAL) constitute a propeptide, removed in mature form.

The protein belongs to the peptidase M8 family. The cofactor is Zn(2+). Post-translationally, the phosphatidylinositol moiety of the GPI-anchor contains a fully saturated, unbranched 1-O-alkyl chain (mainly C24:0) and a mixture of fully saturated unbranched 2-O-acyl chains (C12:0, C14:0, C16:0, and C18:0).

It is found in the cell membrane. The catalysed reaction is Preference for hydrophobic residues at P1 and P1' and basic residues at P2' and P3'. A model nonapeptide is cleaved at -Ala-Tyr-|-Leu-Lys-Lys-.. Functionally, has an integral role during the infection of macrophages in the mammalian host. The polypeptide is Leishmanolysin (gp63) (Leishmania major).